Here is a 434-residue protein sequence, read N- to C-terminus: Enolase (434 aa).

Position 165 (Gln165) interacts with (2R)-2-phosphoglycerate. Glu207 serves as the catalytic Proton donor. Residues Asp244, Glu291, and Asp318 each contribute to the Mg(2+) site. (2R)-2-phosphoglycerate-binding residues include Lys343, Arg372, Ser373, and Lys394. Lys343 serves as the catalytic Proton acceptor.

It belongs to the enolase family. It depends on Mg(2+) as a cofactor.

The protein resides in the cytoplasm. It is found in the secreted. The protein localises to the cell surface. It carries out the reaction (2R)-2-phosphoglycerate = phosphoenolpyruvate + H2O. Its pathway is carbohydrate degradation; glycolysis; pyruvate from D-glyceraldehyde 3-phosphate: step 4/5. Functionally, catalyzes the reversible conversion of 2-phosphoglycerate (2-PG) into phosphoenolpyruvate (PEP). It is essential for the degradation of carbohydrates via glycolysis. This Staphylococcus aureus (strain USA300 / TCH1516) protein is Enolase.